A 190-amino-acid polypeptide reads, in one-letter code: Elongation factor P (190 aa).

The protein belongs to the elongation factor P family.

The protein resides in the cytoplasm. It participates in protein biosynthesis; polypeptide chain elongation. Functionally, involved in peptide bond synthesis. Stimulates efficient translation and peptide-bond synthesis on native or reconstituted 70S ribosomes in vitro. Probably functions indirectly by altering the affinity of the ribosome for aminoacyl-tRNA, thus increasing their reactivity as acceptors for peptidyl transferase. This is Elongation factor P (efp) from Mycoplasma genitalium (strain ATCC 33530 / DSM 19775 / NCTC 10195 / G37) (Mycoplasmoides genitalium).